A 92-amino-acid polypeptide reads, in one-letter code: PqqA binding protein (92 aa).

It belongs to the PqqD family. In terms of assembly, monomer. Interacts with PqqE.

It participates in cofactor biosynthesis; pyrroloquinoline quinone biosynthesis. Functionally, functions as a PqqA binding protein and presents PqqA to PqqE, in the pyrroloquinoline quinone (PQQ) biosynthetic pathway. This chain is PqqA binding protein, found in Xanthomonas axonopodis pv. citri (strain 306).